The sequence spans 1396 residues: DNA-directed RNA polymerase subunit beta' (1396 aa).

Residues Cys-72, Cys-74, Cys-87, and Cys-90 each coordinate Zn(2+). Mg(2+) contacts are provided by Asp-463, Asp-465, and Asp-467. 4 residues coordinate Zn(2+): Cys-814, Cys-889, Cys-896, and Cys-899.

The protein belongs to the RNA polymerase beta' chain family. As to quaternary structure, the RNAP catalytic core consists of 2 alpha, 1 beta, 1 beta' and 1 omega subunit. When a sigma factor is associated with the core the holoenzyme is formed, which can initiate transcription. It depends on Mg(2+) as a cofactor. Zn(2+) serves as cofactor.

The catalysed reaction is RNA(n) + a ribonucleoside 5'-triphosphate = RNA(n+1) + diphosphate. DNA-dependent RNA polymerase catalyzes the transcription of DNA into RNA using the four ribonucleoside triphosphates as substrates. The protein is DNA-directed RNA polymerase subunit beta' of Chlamydia trachomatis serovar L2 (strain ATCC VR-902B / DSM 19102 / 434/Bu).